Consider the following 290-residue polypeptide: Small ribosomal subunit protein uS11 (290 aa).

Positions 243–271 (DWEAAPAGFPATGEWSDAAPGAAAPNWDA) are disordered. Residues 257–271 (WSDAAPGAAAPNWDA) show a composition bias toward low complexity.

This sequence belongs to the universal ribosomal protein uS2 family. Component of the small ribosomal subunit (SSU). Mature N.crassa ribosomes consist of a small (40S) and a large (60S) subunit. The 40S small subunit contains 1 molecule of ribosomal RNA (18S rRNA) and at least 32 different proteins. The large 60S subunit contains 3 rRNA molecules (26S, 5.8S and 5S rRNA) and at least 42 different proteins. Interacts with rps21.

It localises to the cytoplasm. Functionally, component of the ribosome, a large ribonucleoprotein complex responsible for the synthesis of proteins in the cell. The small ribosomal subunit (SSU) binds messenger RNAs (mRNAs) and translates the encoded message by selecting cognate aminoacyl-transfer RNA (tRNA) molecules. The large subunit (LSU) contains the ribosomal catalytic site termed the peptidyl transferase center (PTC), which catalyzes the formation of peptide bonds, thereby polymerizing the amino acids delivered by tRNAs into a polypeptide chain. The nascent polypeptides leave the ribosome through a tunnel in the LSU and interact with protein factors that function in enzymatic processing, targeting, and the membrane insertion of nascent chains at the exit of the ribosomal tunnel. uS2 is required for the assembly and/or stability of the 40S ribosomal subunit. Required for the processing of the 20S rRNA-precursor to mature 18S rRNA in a late step of the maturation of 40S ribosomal subunits. The polypeptide is Small ribosomal subunit protein uS11 (Neurospora crassa (strain ATCC 24698 / 74-OR23-1A / CBS 708.71 / DSM 1257 / FGSC 987)).